A 103-amino-acid polypeptide reads, in one-letter code: Potassium voltage-gated channel subfamily E member 3 (103 aa).

N-linked (GlcNAc...) asparagine glycans are attached at residues Asn5, Asn22, and Asn41. Positions 30–52 are disordered; the sequence is LCRPGPGPGPDNQTEDRRASLPG. The chain crosses the membrane as a helical span at residues 57–77; it reads SYMYILFVMFLFAVTVGSLIL. The segment at 68–79 is interaction with KCNQ1; it reads FAVTVGSLILGY. Over 78-103 the chain is Cytoplasmic; it reads GYTRSRKVDKRSDPYHVYIKNRVSMI.

It belongs to the potassium channel KCNE family. In terms of assembly, interacts with KCNB1. Interacts with KCNC2. Associates with KCNC4/Kv3.4. Interacts with KCNQ1; associates with a KCNQ1:KCNE3 stoichiometry of 4:4; produces a current with nearly instantaneous activation with a linear current-voltage relationship and alters membrane raft localization; affects KCNQ1 structure and gating properties.

The protein localises to the cell membrane. It localises to the cytoplasm. It is found in the perikaryon. The protein resides in the cell projection. Its subcellular location is the dendrite. The protein localises to the membrane raft. Its function is as follows. Ancillary protein that functions as a regulatory subunit of the voltage-gated potassium (Kv) channel complex composed of pore-forming and potassium-conducting alpha subunits and of regulatory beta subunits. KCNE3 beta subunit modulates the gating kinetics and enhances stability of the channel complex. Alters the gating of the delayed rectifier Kv channel containing KCNB1 alpha subunit. Associates with KCNC4/Kv3.4 alpha subunit to form the subthreshold Kv channel in skeletal muscle and to establish the resting membrane potential (RMP) in muscle cells. Association with KCNQ1/KCLQT1 alpha subunit may form the intestinal cAMP-stimulated potassium channel involved in chloride secretion that produces a current with nearly instantaneous activation with a linear current-voltage relationship. In Mus musculus (Mouse), this protein is Potassium voltage-gated channel subfamily E member 3.